We begin with the raw amino-acid sequence, 91 residues long: C-C motif chemokine 5 (91 aa).

The first 23 residues, 1–23 (MKVSAATFAILLATATFRAPASA), serve as a signal peptide directing secretion. Intrachain disulfides connect cysteine 33-cysteine 57 and cysteine 34-cysteine 73.

It belongs to the intercrine beta (chemokine CC) family.

It is found in the secreted. Its function is as follows. Chemoattractant for blood monocytes, memory T-helper cells and eosinophils. Causes the release of histamine from basophils and activates eosinophils. May activate several chemokine receptors including CCR1, CCR3, CCR4 and CCR5. May also be an agonist of the G protein-coupled receptor GPR75. Together with GPR75, may play a role in neuron survival through activation of a downstream signaling pathway involving the PI3, Akt and MAP kinases. By activating GPR75 may also play a role in insulin secretion by islet cells. This is C-C motif chemokine 5 (CCL5) from Canis lupus familiaris (Dog).